The chain runs to 388 residues: Zinc finger C2H2 protein ECU10_0150 (388 aa).

The C2H2-type zinc-finger motif lies at 299 to 322 (YKCGFCGKAFESEKFIFNHFNNKH).

The sequence is that of Zinc finger C2H2 protein ECU10_0150 from Encephalitozoon cuniculi (strain GB-M1) (Microsporidian parasite).